Here is a 129-residue protein sequence, read N- to C-terminus: Glycine cleavage system H protein (129 aa).

Residues 24-106 enclose the Lipoyl-binding domain; that stretch reads SVVVGVTQHA…YGAGWIVEIE (83 aa). Residue Lys65 is modified to N6-lipoyllysine.

This sequence belongs to the GcvH family. As to quaternary structure, the glycine cleavage system is composed of four proteins: P, T, L and H. It depends on (R)-lipoate as a cofactor.

Its function is as follows. The glycine cleavage system catalyzes the degradation of glycine. The H protein shuttles the methylamine group of glycine from the P protein to the T protein. This is Glycine cleavage system H protein from Myxococcus xanthus (strain DK1622).